Consider the following 170-residue polypeptide: MKTQRDGHSLGRWSLVLLLLGLVMPLAIIAQVLSYKEAVLRAIDGINQRSSDANLYRLLDLDPRPTMDGDPDTPKPVSFTVKETVCPRTTQQSPEDCDFKKDGLVKRCMGTVTLNQARGSFDISCDKDNKRFALLGDFFRKSKEKIGKEFKRIVQRIKDFLRNLVPRTES.

Residues 1–30 (MKTQRDGHSLGRWSLVLLLLGLVMPLAIIA) form the signal peptide. Positions 31-131 (QVLSYKEAVL…DISCDKDNKR (101 aa)) are cleaved as a propeptide — cathelin-like domain (CLD). 2 cysteine pairs are disulfide-bonded: cysteine 86-cysteine 97 and cysteine 108-cysteine 125. An active core region spans residues 150-162 (FKRIVQRIKDFLR).

Belongs to the cathelicidin family. Monomer, homodimer or homotrimer (in vitro). Oligomerizes as tetra- or hexamer in solution (in vitro). Post-translationally, the N-terminus is blocked. In terms of processing, proteolytically cleaved by proteinase PRTN3 into antibacterial peptide LL-37. Proteolytically cleaved by cathepsin CTSG and neutrophil elastase ELANE. Resistant to proteolytic degradation in solution, and when bound to both zwitterionic (mimicking mammalian membranes) and negatively charged membranes (mimicking bacterial membranes). Post-translationally, after secretion onto the skin surface, the CAMP gene product is processed by a serine protease-dependent mechanism into multiple novel antimicrobial peptides distinct from and shorter than cathelicidin LL-37, such as peptides KR-20 (residues 151-170), LL-23 (residues 134-156), LL-29 (residues 134-162), KS-30 (residues 141-170), RK-31 (residues 140-170) and FF-33 (residues 138-170). The peptides act synergistically, killing bacteria at lower concentrations when present together, and maintain activity at increased salt condition. As to expression, expressed in neutrophilic granulocytes (at protein level). Expressed in bone marrow. In terms of tissue distribution, expressed in granulocytes (at protein level). Expressed by the eccrine apparatus and secreted into sweat on skin (at protein level). Expressed in bone marrow and testis.

It localises to the secreted. Its subcellular location is the vesicle. Functionally, antimicrobial protein that is an integral component of the innate immune system. Binds to bacterial lipopolysaccharides (LPS). Acts via neutrophil N-formyl peptide receptors to enhance the release of CXCL2. Postsecretory processing generates multiple cathelicidin antimicrobial peptides with various lengths which act as a topical antimicrobial defense in sweat on skin. The unprocessed precursor form, cathelicidin antimicrobial peptide, inhibits the growth of Gram-negative E.coli and E.aerogenes with efficiencies comparable to that of the mature peptide LL-37 (in vitro). Antimicrobial peptide that is an integral component of the innate immune system. Binds to bacterial lipopolysaccharides (LPS). Causes membrane permeabilization by forming transmembrane pores (in vitro). Causes lysis of E.coli. Exhibits antimicrobial activity against Gram-negative bacteria such as P.aeruginosa, S.typhimurium, E.aerogenes, E.coli and P.syringae, Gram-positive bacteria such as L.monocytogenes, S.epidermidis, S.pyogenes and S.aureus, as well as vancomycin-resistant enterococci (in vitro). Exhibits antimicrobial activity against methicillin-resistant S.aureus, P.mirabilis, and C.albicans in low-salt media, but not in media containing 100 mM NaCl (in vitro). Forms chiral supramolecular assemblies with quinolone signal (PQS) molecules of P.aeruginosa, which may lead to interference of bacterial quorum signaling and perturbance of bacterial biofilm formation. May form supramolecular fiber-like assemblies on bacterial membranes. Induces cytokine and chemokine production as well as TNF/TNFA and CSF2/GMCSF production in normal human keratinocytes. Exhibits hemolytic activity against red blood cells. In terms of biological role, exhibits antimicrobial activity against E.coli and B.megaterium (in vitro). Its function is as follows. Acts synergistically with peptides KS-30 and KR-31, killing bacteria such as S.aureus, E.coli and C.albicans at lower concentrations when present together, and maintains activity at increased salt condition. Does not have the ability to stimulate CXCL8/IL8 release from keratinocytes. Functionally, poorly active (MIC &gt; 150 uM) against E.coli strain K12. Is able to induce the pro-inflammatory cytokine TNF/TNFA or the chemokine CCL2/MCP1. Moderately antibacterial. In terms of biological role, moderately antibacterial. Acts synergistically with peptides KR-20 and KR-31, killing bacteria such as S.aureus, E.coli and C.albicans at lower concentrations when present together, and maintain activity at increased salt condition. Does not have the ability to stimulate CXCL8/IL8 release from keratinocytes. Its function is as follows. Acts synergistically with peptides KS-30 and KR-31, killing bacteria such as S.aureus, E.coli and C.albicans at lower concentrations when present together, and maintain activity at increased salt condition. Does not have the ability to stimulate CXCL8/IL8 release from keratinocytes. Functionally, inhibits the growth of E.coli and B.megaterium and exhibits hemolytic activity against human red blood cells. This chain is Cathelicidin antimicrobial peptide, found in Homo sapiens (Human).